The sequence spans 380 residues: Methylthioribose-1-phosphate isomerase (380 aa).

Aspartate 257 (proton donor) is an active-site residue.

Belongs to the eIF-2B alpha/beta/delta subunits family. MtnA subfamily.

Its subcellular location is the cytoplasm. It is found in the nucleus. It catalyses the reaction 5-(methylsulfanyl)-alpha-D-ribose 1-phosphate = 5-(methylsulfanyl)-D-ribulose 1-phosphate. It functions in the pathway amino-acid biosynthesis; L-methionine biosynthesis via salvage pathway; L-methionine from S-methyl-5-thio-alpha-D-ribose 1-phosphate: step 1/6. Functionally, catalyzes the interconversion of methylthioribose-1-phosphate (MTR-1-P) into methylthioribulose-1-phosphate (MTRu-1-P). The sequence is that of Methylthioribose-1-phosphate isomerase from Naegleria gruberi (Amoeba).